Consider the following 204-residue polypeptide: Urease accessory protein UreG (204 aa).

12-19 (GPVGSGKT) contributes to the GTP binding site.

The protein belongs to the SIMIBI class G3E GTPase family. UreG subfamily. As to quaternary structure, homodimer. UreD, UreF and UreG form a complex that acts as a GTP-hydrolysis-dependent molecular chaperone, activating the urease apoprotein by helping to assemble the nickel containing metallocenter of UreC. The UreE protein probably delivers the nickel.

It is found in the cytoplasm. Its function is as follows. Facilitates the functional incorporation of the urease nickel metallocenter. This process requires GTP hydrolysis, probably effectuated by UreG. The polypeptide is Urease accessory protein UreG (Hahella chejuensis (strain KCTC 2396)).